Reading from the N-terminus, the 309-residue chain is Olfactory receptor 7A40 (309 aa).

The Extracellular portion of the chain corresponds to 1-26 (MELKNDTQISKFILLGISEDPLWQPF). Residue Asn5 is glycosylated (N-linked (GlcNAc...) asparagine). A helical membrane pass occupies residues 27-47 (LFGLFLFMYLVTLLGNLLIII). At 48–57 (ATITDSHLHT) the chain is on the cytoplasmic side. The chain crosses the membrane as a helical span at residues 58-78 (PMYFFLSNLSFADICFTSASI). At 79–97 (PKMLVNIQTKNKVITYEGC) the chain is on the extracellular side. Cys97 and Cys179 are disulfide-bonded. A helical membrane pass occupies residues 98–118 (ISQVFFFILFGVLDNFLLAVM). The Cytoplasmic segment spans residues 119-139 (AYDRYVAICHPLHYMVIMNCR). A helical transmembrane segment spans residues 140–160 (LCGFLVLGSWVTTALNSLLQS). The Extracellular segment spans residues 161 to 196 (SMALRLSFCTDLKIPHFVCELNQLVLLACNDTFPND). The chain crosses the membrane as a helical span at residues 197 to 217 (MVMYFAAILLGGGPLAGILYS). The Cytoplasmic segment spans residues 218-244 (YSKIVSSIRAISSSQGKYKAFSTCASH). Residues 245-265 (LSVVSLFYSTLLGVYLSSSFT) form a helical membrane-spanning segment. Over 266–269 (QNSH) the chain is Extracellular. The helical transmembrane segment at 270–292 (STARASVMYSVVTPMLNPFIYSL) threads the bilayer. The Cytoplasmic segment spans residues 293–309 (RNKDLMGALRRLLRRKS).

Belongs to the G-protein coupled receptor 1 family.

It localises to the cell membrane. In terms of biological role, odorant receptor. This chain is Olfactory receptor 7A40, found in Mus musculus (Mouse).